A 473-amino-acid polypeptide reads, in one-letter code: Photosystem II CP43 reaction center protein (473 aa).

A propeptide spanning residues 1-14 (MKTLYSLRRFYHVE) is cleaved from the precursor. T15 bears the N-acetylthreonine mark. T15 is modified (phosphothreonine). 5 helical membrane passes run 69–93 (LFEV…PHLA), 134–155 (LLGP…KDRN), 178–200 (KALY…RKIT), 255–275 (KPFA…LSYS), and 291–312 (WFNN…ASQA). E367 provides a ligand contact to [CaMn4O5] cluster. A helical membrane pass occupies residues 447 to 471 (RARAAAAGFEKGIDRDFEPVLSMTP).

It belongs to the PsbB/PsbC family. PsbC subfamily. In terms of assembly, PSII is composed of 1 copy each of membrane proteins PsbA, PsbB, PsbC, PsbD, PsbE, PsbF, PsbH, PsbI, PsbJ, PsbK, PsbL, PsbM, PsbT, PsbX, PsbY, PsbZ, Psb30/Ycf12, at least 3 peripheral proteins of the oxygen-evolving complex and a large number of cofactors. It forms dimeric complexes. Binds multiple chlorophylls and provides some of the ligands for the Ca-4Mn-5O cluster of the oxygen-evolving complex. It may also provide a ligand for a Cl- that is required for oxygen evolution. PSII binds additional chlorophylls, carotenoids and specific lipids. serves as cofactor.

It localises to the plastid. The protein resides in the chloroplast thylakoid membrane. Its function is as follows. One of the components of the core complex of photosystem II (PSII). It binds chlorophyll and helps catalyze the primary light-induced photochemical processes of PSII. PSII is a light-driven water:plastoquinone oxidoreductase, using light energy to abstract electrons from H(2)O, generating O(2) and a proton gradient subsequently used for ATP formation. This chain is Photosystem II CP43 reaction center protein, found in Draba nemorosa (Woodland whitlowgrass).